Consider the following 267-residue polypeptide: Membrane-associated protein Vipp1 (267 aa).

Residues 26–156 adopt a coiled-coil conformation; that stretch reads EKVLEQAVID…KANAELQQTL (131 aa). Residues 224 to 252 are disordered; the sequence is GTSAATPQLEAAPVDSSVPANNASQDDAV.

The protein belongs to the PspA/Vipp/IM30 family.

The protein resides in the cell inner membrane. Functionally, required for thylakoid formation. This chain is Membrane-associated protein Vipp1, found in Synechocystis sp. (strain ATCC 27184 / PCC 6803 / Kazusa).